The sequence spans 155 residues: 6,7-dimethyl-8-ribityllumazine synthase (155 aa).

5-amino-6-(D-ribitylamino)uracil-binding positions include tryptophan 23, 57–59, and 81–83; these read AWE and CVI. 86–87 is a (2S)-2-hydroxy-3-oxobutyl phosphate binding site; sequence DT. Histidine 89 acts as the Proton donor in catalysis. A 5-amino-6-(D-ribitylamino)uracil-binding site is contributed by asparagine 114. Arginine 128 is a binding site for (2S)-2-hydroxy-3-oxobutyl phosphate.

Belongs to the DMRL synthase family. In terms of assembly, forms an icosahedral capsid composed of 60 subunits, arranged as a dodecamer of pentamers.

It carries out the reaction (2S)-2-hydroxy-3-oxobutyl phosphate + 5-amino-6-(D-ribitylamino)uracil = 6,7-dimethyl-8-(1-D-ribityl)lumazine + phosphate + 2 H2O + H(+). It participates in cofactor biosynthesis; riboflavin biosynthesis; riboflavin from 2-hydroxy-3-oxobutyl phosphate and 5-amino-6-(D-ribitylamino)uracil: step 1/2. Its function is as follows. Catalyzes the formation of 6,7-dimethyl-8-ribityllumazine by condensation of 5-amino-6-(D-ribitylamino)uracil with 3,4-dihydroxy-2-butanone 4-phosphate. This is the penultimate step in the biosynthesis of riboflavin. The polypeptide is 6,7-dimethyl-8-ribityllumazine synthase (Stenotrophomonas maltophilia (strain K279a)).